We begin with the raw amino-acid sequence, 428 residues long: Gamma-glutamyl phosphate reductase (428 aa).

Belongs to the gamma-glutamyl phosphate reductase family.

The protein localises to the cytoplasm. The enzyme catalyses L-glutamate 5-semialdehyde + phosphate + NADP(+) = L-glutamyl 5-phosphate + NADPH + H(+). It functions in the pathway amino-acid biosynthesis; L-proline biosynthesis; L-glutamate 5-semialdehyde from L-glutamate: step 2/2. In terms of biological role, catalyzes the NADPH-dependent reduction of L-glutamate 5-phosphate into L-glutamate 5-semialdehyde and phosphate. The product spontaneously undergoes cyclization to form 1-pyrroline-5-carboxylate. This Chromohalobacter salexigens (strain ATCC BAA-138 / DSM 3043 / CIP 106854 / NCIMB 13768 / 1H11) protein is Gamma-glutamyl phosphate reductase.